Here is a 598-residue protein sequence, read N- to C-terminus: MRSHYCGDVNKSHVGQEVTLVGWVNRSRDLGGVVFLDLRDREGIVQVVYDPDLPEVFDVASTLRSEFCVQIKGLVRARPDSQINADMRTGEVEILGLELTILNSSAPLPINMDKNQHNTEEQRLKYRYLDLRRPEMADRIVFRSKVTSAVRRFLDGNGFLDIETPILTKATPEGARDYLVPSRTYKGQFFALPQSPQLFKQLLMMSGFDRYYQIVKCFRDEDLRADRQPEFTQIDIETSFMSSDQVMAKTEEMVRGLFQELLNVDLGEFPKMTFEEAMRRFGSDKPDLRNPLELIDVADIVKEVEFAVFNGPANDPEGRVAVLSIPGGAKLSRKQLDEYAKYVTIYGAKGLAWMKVNDLDKGMEGIQSPVLKFLSEDVVKALLERTGAQTGDLILFGADKANIVAESMGALRLKAGEDFDLLQGEWKPLWVVDFPMFERTSDGGLHAMHHPFTAPSNMTPEELEANPIAAISDAYDMVLNGCELGGGSVRIHDSKMQSAVFRILGINDEEATEKFGFLLEALRYGTPPHAGLAFGLDRIIMLMTGASSIRDVMAFPKTTTAACPLTNAPGFANPVQLAELGVSVVEAETKDSETKDAE.

Glu173 is a binding site for L-aspartate. Residues 197-200 (QLFK) are aspartate. Residue Arg219 coordinates L-aspartate. Residues 219–221 (RDE) and Gln228 contribute to the ATP site. L-aspartate is bound at residue His449. Glu483 lines the ATP pocket. Arg490 serves as a coordination point for L-aspartate. ATP is bound at residue 535 to 538 (GLDR).

It belongs to the class-II aminoacyl-tRNA synthetase family. Type 1 subfamily. As to quaternary structure, homodimer.

The protein resides in the cytoplasm. The catalysed reaction is tRNA(Asp) + L-aspartate + ATP = L-aspartyl-tRNA(Asp) + AMP + diphosphate. In terms of biological role, catalyzes the attachment of L-aspartate to tRNA(Asp) in a two-step reaction: L-aspartate is first activated by ATP to form Asp-AMP and then transferred to the acceptor end of tRNA(Asp). This chain is Aspartate--tRNA ligase, found in Shewanella halifaxensis (strain HAW-EB4).